The primary structure comprises 94 residues: Small ribosomal subunit protein uS19 (94 aa).

The protein belongs to the universal ribosomal protein uS19 family.

Its function is as follows. Protein S19 forms a complex with S13 that binds strongly to the 16S ribosomal RNA. This Endomicrobium trichonymphae protein is Small ribosomal subunit protein uS19.